The primary structure comprises 245 residues: Thiopurine S-methyltransferase (245 aa).

Trp-29–Phe-40 is a binding site for S-adenosyl-L-methionine. A substrate-binding site is contributed by Phe-40. At Lys-58 the chain carries N6-acetyllysine. 3 residues coordinate S-adenosyl-L-methionine: Leu-69, Glu-90, and Arg-152.

This sequence belongs to the class I-like SAM-binding methyltransferase superfamily. TPMT family. Monomer.

The protein resides in the cytoplasm. The catalysed reaction is S-adenosyl-L-methionine + a thiopurine = S-adenosyl-L-homocysteine + a thiopurine S-methylether.. The chain is Thiopurine S-methyltransferase (TPMT) from Canis lupus familiaris (Dog).